We begin with the raw amino-acid sequence, 104 residues long: MPSQPFQDDGVVLETARPKVKPPKRYQVVLLNDDFTPMDFVVDVLTRFFGMDEAKANAVMLAVHTKGKGTCGVYSREVAEMKVMQVNQYAREHQHPLQCEMEVV.

This sequence belongs to the ClpS family. Binds to the N-terminal domain of the chaperone ClpA.

Involved in the modulation of the specificity of the ClpAP-mediated ATP-dependent protein degradation. The protein is ATP-dependent Clp protease adapter protein ClpS of Hydrogenovibrio crunogenus (strain DSM 25203 / XCL-2) (Thiomicrospira crunogena).